The primary structure comprises 154 residues: 6,7-dimethyl-8-ribityllumazine synthase (154 aa).

5-amino-6-(D-ribitylamino)uracil contacts are provided by residues phenylalanine 15, threonine 47–aspartate 49, and alanine 71–isoleucine 73. Residue glutamate 76–threonine 77 coordinates (2S)-2-hydroxy-3-oxobutyl phosphate. Catalysis depends on histidine 79, which acts as the Proton donor. Position 104 (leucine 104) interacts with 5-amino-6-(D-ribitylamino)uracil. Arginine 119 is a binding site for (2S)-2-hydroxy-3-oxobutyl phosphate.

This sequence belongs to the DMRL synthase family.

The catalysed reaction is (2S)-2-hydroxy-3-oxobutyl phosphate + 5-amino-6-(D-ribitylamino)uracil = 6,7-dimethyl-8-(1-D-ribityl)lumazine + phosphate + 2 H2O + H(+). It participates in cofactor biosynthesis; riboflavin biosynthesis; riboflavin from 2-hydroxy-3-oxobutyl phosphate and 5-amino-6-(D-ribitylamino)uracil: step 1/2. In terms of biological role, catalyzes the formation of 6,7-dimethyl-8-ribityllumazine by condensation of 5-amino-6-(D-ribitylamino)uracil with 3,4-dihydroxy-2-butanone 4-phosphate. This is the penultimate step in the biosynthesis of riboflavin. The sequence is that of 6,7-dimethyl-8-ribityllumazine synthase from Saccharolobus solfataricus (strain ATCC 35092 / DSM 1617 / JCM 11322 / P2) (Sulfolobus solfataricus).